The following is a 428-amino-acid chain: GTPase Obg (428 aa).

The Obg domain occupies methionine 1–leucine 158. In terms of domain architecture, OBG-type G spans alanine 159–lysine 333. Residues glycine 165–serine 172, phenylalanine 190–valine 194, aspartate 212–glycine 215, threonine 282–aspartate 285, and serine 314–leucine 316 each bind GTP. Mg(2+) contacts are provided by serine 172 and threonine 192. In terms of domain architecture, OCT spans tyrosine 350 to glutamate 428.

The protein belongs to the TRAFAC class OBG-HflX-like GTPase superfamily. OBG GTPase family. In terms of assembly, monomer. Mg(2+) serves as cofactor.

It localises to the cytoplasm. Functionally, an essential GTPase which binds GTP, GDP and possibly (p)ppGpp with moderate affinity, with high nucleotide exchange rates and a fairly low GTP hydrolysis rate. Plays a role in control of the cell cycle, stress response, ribosome biogenesis and in those bacteria that undergo differentiation, in morphogenesis control. This Lacticaseibacillus paracasei (strain ATCC 334 / BCRC 17002 / CCUG 31169 / CIP 107868 / KCTC 3260 / NRRL B-441) (Lactobacillus paracasei) protein is GTPase Obg.